A 62-amino-acid polypeptide reads, in one-letter code: Large ribosomal subunit protein bL28 (62 aa).

Belongs to the bacterial ribosomal protein bL28 family.

In Helicobacter pylori (strain HPAG1), this protein is Large ribosomal subunit protein bL28.